The primary structure comprises 389 residues: Succinate--CoA ligase [ADP-forming] subunit beta (389 aa).

In terms of domain architecture, ATP-grasp spans 9 to 244 (KEIFRSMGVA…LDEEDPKEIE (236 aa)). ATP-binding positions include Lys46, 53 to 55 (GRG), Glu99, Cys102, and Glu107. Residues Asn199 and Asp213 each coordinate Mg(2+). Substrate-binding positions include Asn264 and 321 to 323 (GIM).

The protein belongs to the succinate/malate CoA ligase beta subunit family. In terms of assembly, heterotetramer of two alpha and two beta subunits. The cofactor is Mg(2+).

The catalysed reaction is succinate + ATP + CoA = succinyl-CoA + ADP + phosphate. It catalyses the reaction GTP + succinate + CoA = succinyl-CoA + GDP + phosphate. Its pathway is carbohydrate metabolism; tricarboxylic acid cycle; succinate from succinyl-CoA (ligase route): step 1/1. Succinyl-CoA synthetase functions in the citric acid cycle (TCA), coupling the hydrolysis of succinyl-CoA to the synthesis of either ATP or GTP and thus represents the only step of substrate-level phosphorylation in the TCA. The beta subunit provides nucleotide specificity of the enzyme and binds the substrate succinate, while the binding sites for coenzyme A and phosphate are found in the alpha subunit. This chain is Succinate--CoA ligase [ADP-forming] subunit beta, found in Macrococcus caseolyticus (strain JCSC5402) (Macrococcoides caseolyticum).